Reading from the N-terminus, the 99-residue chain is Malonate decarboxylase acyl carrier protein (99 aa).

Ser25 is subject to O-(phosphoribosyl dephospho-coenzyme A)serine.

This sequence belongs to the MdcC family. Covalently binds the prosthetic group of malonate decarboxylase.

It is found in the cytoplasm. Subunit of malonate decarboxylase, it is an acyl carrier protein to which acetyl and malonyl thioester residues are bound via a 2'-(5''-phosphoribosyl)-3'-dephospho-CoA prosthetic group and turn over during the catalytic mechanism. This is Malonate decarboxylase acyl carrier protein from Pseudomonas aeruginosa (strain LESB58).